Here is a 344-residue protein sequence, read N- to C-terminus: Heme A synthase (344 aa).

9 consecutive transmembrane segments (helical) span residues 20 to 40 (IAWW…VGGL), 104 to 124 (RFLG…FVVT), 135 to 155 (LIFL…MVMS), 170 to 190 (AHLG…LDLL), 205 to 225 (AAAI…VAGI), 233 to 253 (TWPL…TPVW), 265 to 285 (FQHR…WWAA), 296 to 316 (WLAV…LWVV), and 317 to 337 (PIPL…VAVW). H267 contacts heme. Position 324 (H324) interacts with heme.

It belongs to the COX15/CtaA family. Type 2 subfamily. In terms of assembly, interacts with CtaB. Requires heme b as cofactor.

The protein resides in the cell membrane. The enzyme catalyses Fe(II)-heme o + 2 A + H2O = Fe(II)-heme a + 2 AH2. It participates in porphyrin-containing compound metabolism; heme A biosynthesis; heme A from heme O: step 1/1. Functionally, catalyzes the conversion of heme O to heme A by two successive hydroxylations of the methyl group at C8. The first hydroxylation forms heme I, the second hydroxylation results in an unstable dihydroxymethyl group, which spontaneously dehydrates, resulting in the formyl group of heme A. This is Heme A synthase from Parvibaculum lavamentivorans (strain DS-1 / DSM 13023 / NCIMB 13966).